A 386-amino-acid polypeptide reads, in one-letter code: Patatin (386 aa).

The first 23 residues, 1–23, serve as a signal peptide directing secretion; it reads MATTKSFLILFFMILATTSSTCA. Residues 32 to 229 enclose the PNPLA domain; sequence LSIDGGGIKG…TVGDPALLSL (198 aa). The short motif at 36-41 is the GXGXXG element; it reads GGGIKG. A GXSXG motif is present at residues 75–79; the sequence is GTSTG. The active-site Nucleophile is the S77. N-linked (GlcNAc...) asparagine glycosylation is present at N115. D215 acts as the Proton acceptor in catalysis. The DGA/G signature appears at 215–217; the sequence is DGA.

This sequence belongs to the patatin family.

The protein resides in the vacuole. In terms of biological role, probable lipolytic acyl hydrolase (LAH), an activity which is thought to be involved in the response of tubers to pathogens. The polypeptide is Patatin (Solanum tuberosum (Potato)).